The sequence spans 289 residues: Spore coat polysaccharide biosynthesis protein SpsD (289 aa).

The 153-residue stretch at 137-289 (FELGPPEPGD…YHIWPGKEAK (153 aa)) folds into the N-acetyltransferase domain.

It functions in the pathway spore coat biogenesis; spore coat polysaccharide biosynthesis. This Bacillus subtilis (strain 168) protein is Spore coat polysaccharide biosynthesis protein SpsD (spsD).